The sequence spans 202 residues: Protein lin-28 homolog A (202 aa).

The interval 1–31 (MGSVSNQQFAGAKPGEEPSGDSPKAENESQP) is disordered. The CSD domain occupies 33 to 106 (HGSGICKWFN…GLESIRVTGP (74 aa)). A flexible linker region spans residues 107–130 (GGVFCIGSERRPKSKSLQKRRSKG). 2 consecutive CCHC-type zinc fingers follow at residues 131-148 (DRCY…ECKL) and 153-170 (KKCH…NCPA). Residues Cys-133, Cys-136, His-141, Cys-146, Cys-155, Cys-158, His-163, and Cys-168 each contribute to the Zn(2+) site. Positions 169 to 202 (PAKAQQSPSSQGKPAYFREKEDMHSSALLPETRE) are disordered.

This sequence belongs to the lin-28 family. Monomer.

The protein resides in the cytoplasm. The protein localises to the rough endoplasmic reticulum. Its subcellular location is the P-body. It localises to the stress granule. It is found in the nucleus. The protein resides in the nucleolus. Functionally, RNA-binding protein that inhibits processing of pre-let-7 miRNAs and regulates translation of mRNAs that control developmental timing, pluripotency and metabolism. Seems to recognize a common structural G-quartet (G4) feature in its miRNA and mRNA targets. 'Translational enhancer' that drives specific mRNAs to polysomes and increases the efficiency of protein synthesis. Its association with the translational machinery and target mRNAs results in an increased number of initiation events per molecule of mRNA and, indirectly, in mRNA stabilization. Suppressor of microRNA (miRNA) biogenesis, including that of let-7. Binds specific target miRNA precursors (pre-miRNAs), recognizing an 5'-GGAG-3' motif found in their terminal loop, and recruits uridylyltransferase. This results in the terminal uridylation of target pre-miRNAs. Uridylated pre-miRNAs fail to be processed by Dicer and undergo degradation. Localized to the periendoplasmic reticulum area, binds to a large number of spliced mRNAs and inhibits the translation of mRNAs destined for the ER, reducing the synthesis of transmembrane proteins, ER or Golgi lumen proteins, and secretory proteins. Binds to and enhances the translation of mRNAs for several metabolic enzymes, increasing glycolysis and oxidative phosphorylation. Which, with the let-7 repression may enhance tissue repair in adult tissue. This chain is Protein lin-28 homolog A (LIN28A), found in Gallus gallus (Chicken).